The sequence spans 675 residues: Protein kintoun (675 aa).

4 disordered regions span residues 98–131 (ASKK…KQGA), 265–293 (AGEG…TAPP), 310–340 (EGGA…AVAK), and 509–659 (EAAH…AAPT). Residues 102–113 (QQQEQEKQEKEQ) are compositionally biased toward basic and acidic residues. Residues 279–293 (VPGVPDLPGAKTAPP) are compositionally biased toward low complexity. The span at 529-543 (AAAASSGAAPAPAAA) shows a compositional bias: low complexity. Over residues 544–553 (SEEEEEEDKE) the composition is skewed to acidic residues. Residues 564 to 577 (DPAAAAAAAGASSG) show a composition bias toward low complexity. The span at 579-596 (ELTENERKWRELHARQQQ) shows a compositional bias: basic and acidic residues. Low complexity-rich tracts occupy residues 604–617 (AAEA…AAAE) and 628–659 (VAQG…AAPT).

It belongs to the PIH1 family. Kintoun subfamily.

Its subcellular location is the cytoplasm. Required for cytoplasmic pre-assembly of axonemal dyneins, thereby playing a central role in motility in cilia and flagella. Involved in pre-assembly of dynein arm complexes in the cytoplasm before intraflagellar transport loads them for the ciliary compartment. This is Protein kintoun (pf13) from Chlamydomonas reinhardtii (Chlamydomonas smithii).